The sequence spans 131 residues: Glycine cleavage system H protein (131 aa).

The Lipoyl-binding domain occupies 24 to 106 (TVRVGITDYA…YGEGWLVELQ (83 aa)). Lys65 carries the N6-lipoyllysine modification.

The protein belongs to the GcvH family. The glycine cleavage system is composed of four proteins: P, T, L and H. (R)-lipoate is required as a cofactor.

The glycine cleavage system catalyzes the degradation of glycine. The H protein shuttles the methylamine group of glycine from the P protein to the T protein. This Mycolicibacterium vanbaalenii (strain DSM 7251 / JCM 13017 / BCRC 16820 / KCTC 9966 / NRRL B-24157 / PYR-1) (Mycobacterium vanbaalenii) protein is Glycine cleavage system H protein.